A 411-amino-acid polypeptide reads, in one-letter code: UPF0761 membrane protein PSPA7_4558 (411 aa).

Transmembrane regions (helical) follow at residues 36–56 (LFAV…IPAF), 92–112 (HLTW…LVTI), 132–152 (FLLY…GFAV), 174–194 (LLGL…YSAV), 207–229 (GGMF…VSLF), and 244–264 (IFLL…VLVC).

The protein belongs to the UPF0761 family.

It is found in the cell inner membrane. This is UPF0761 membrane protein PSPA7_4558 from Pseudomonas paraeruginosa (strain DSM 24068 / PA7) (Pseudomonas aeruginosa (strain PA7)).